The following is a 222-amino-acid chain: Pyridoxine/pyridoxamine 5'-phosphate oxidase (222 aa).

Residues 14–17 and Lys-71 contribute to the substrate site; that span reads RRNY. FMN-binding positions include 66–71, 81–82, Arg-87, Lys-88, and Gln-110; these read RTVLLK and FT. The substrate site is built by Tyr-128, Arg-132, and Ser-136. Residues 145–146 and Trp-190 contribute to the FMN site; that span reads QS. Residue 196 to 198 participates in substrate binding; the sequence is RLN. Residue Arg-200 participates in FMN binding.

This sequence belongs to the pyridoxamine 5'-phosphate oxidase family. As to quaternary structure, homodimer. It depends on FMN as a cofactor.

The enzyme catalyses pyridoxamine 5'-phosphate + O2 + H2O = pyridoxal 5'-phosphate + H2O2 + NH4(+). The catalysed reaction is pyridoxine 5'-phosphate + O2 = pyridoxal 5'-phosphate + H2O2. It participates in cofactor metabolism; pyridoxal 5'-phosphate salvage; pyridoxal 5'-phosphate from pyridoxamine 5'-phosphate: step 1/1. The protein operates within cofactor metabolism; pyridoxal 5'-phosphate salvage; pyridoxal 5'-phosphate from pyridoxine 5'-phosphate: step 1/1. Catalyzes the oxidation of either pyridoxine 5'-phosphate (PNP) or pyridoxamine 5'-phosphate (PMP) into pyridoxal 5'-phosphate (PLP). In Prochlorococcus marinus (strain MIT 9303), this protein is Pyridoxine/pyridoxamine 5'-phosphate oxidase.